The chain runs to 363 residues: Chemerin-like receptor 1 (363 aa).

The Extracellular segment spans residues 1 to 39 (MDFEDYNSTYEDSYTDDFDTIVALEEFSPLEGRVVRIFL). Asparagine 7 carries an N-linked (GlcNAc...) asparagine glycan. Residues 40 to 60 (VVVYSIICFLGILGNGLVIVI) form a helical membrane-spanning segment. The Cytoplasmic segment spans residues 61–71 (ATFKMKKTVNT). The chain crosses the membrane as a helical span at residues 72–92 (VWFLNLAVADFLFNVFLPIHI). Residues 93–109 (AYAAMDYHWVFGTAMCK) are Extracellular-facing. Cysteines 108 and 185 form a disulfide. A helical transmembrane segment spans residues 110 to 130 (ISNFLLIHNMYTSVFLLTVIS). Residues 131 to 152 (FDRCISVLLPVWSQNHRSIRLA) lie on the Cytoplasmic side of the membrane. Residues 153-173 (YMACVVIWVLAFFLSSPSLVF) traverse the membrane as a helical segment. At 174–220 (RDTAHLHGKISCFNNFSLSATSSSSWPTHPQMDTVGFGRQMVVTITR) the chain is on the extracellular side. Residue asparagine 188 is glycosylated (N-linked (GlcNAc...) asparagine). Residues 221 to 241 (FLCGFLVPVLIISACYFTIVY) traverse the membrane as a helical segment. Over 242 to 256 (KLRRNRLAKTKKPFK) the chain is Cytoplasmic. The helical transmembrane segment at 257–277 (IIVTIIITFFLCWCPYHTLYL) threads the bilayer. At 278 to 283 (LELHHR) the chain is on the extracellular side. The chain crosses the membrane as a helical span at residues 284-304 (AMPGSVFSLGVPLATAIAIAN). Residues 305 to 363 (SCMNPILYVFMGQDFKKFKVALFSRLVNALSEDTGHSSYPSHRSFTKMSSMNERETSML) lie on the Cytoplasmic side of the membrane. Position 335 is a phosphoserine (serine 335). The segment at 337 to 363 (DTGHSSYPSHRSFTKMSSMNERETSML) is disordered. The residue at position 338 (threonine 338) is a Phosphothreonine. Over residues 340–355 (HSSYPSHRSFTKMSSM) the composition is skewed to polar residues. A phosphoserine mark is found at serine 345, serine 348, and serine 354.

It belongs to the chemokine-like receptor (CMKLR) family. Predominantly expressed in spleen and temperately in adipose tissue.

Its subcellular location is the cell membrane. Functionally, receptor for the chemoattractant adipokine chemerin/RARRES2 and for the omega-3 fatty acid derived molecule resolvin E1. Interaction with RARRES2 initiates activation of G proteins G(i)/G(o) and beta-arrestin pathways inducing cellular responses via second messenger pathways such as intracellular calcium mobilization, phosphorylation of MAP kinases MAPK1/MAPK3 (ERK1/2), TYRO3, MAPK14/P38MAPK and PI3K leading to multifunctional effects, like, reduction of immune responses, enhancing of adipogenesis and angionesis. Resolvin E1 down-regulates cytokine production in macrophages by reducing the activation of MAPK1/3 (ERK1/2) and NF-kappa-B. Positively regulates adipogenesis and adipocyte metabolism. The polypeptide is Chemerin-like receptor 1 (CMLKR1) (Sus scrofa (Pig)).